Here is a 445-residue protein sequence, read N- to C-terminus: MAVAIAAARVWRLNRGLSQAALLLLRQPGARGLARSHPPRQQQQFSSLDDKPQFPGASAEFIDKLEFIQPNVISGIPIYRVMDRQGQIINPSEDPHLPKEKVLKLYKSMTLLNTMDRILYESQRQGRISFYMTNYGEEGTHVGSAAALDNTDLVFGQYREAGVLMYRDYPLELFMAQCYGNISDLGKGRQMPVHYGCKERHFVTISSPLATQIPQAVGAAYAAKRANANRVVICYFGEGAASEGDAHAGFNFAATLECPIIFFCRNNGYAISTPTSEQYRGDGIAARGPGYGIMSIRVDGNDVFAVYNATKEARRRAVAENQPFLIEAMTYRIGHHSTSDDSSAYRSVDEVNYWDKQDHPISRLRHYLLSQGWWDEEQEKAWRKQSRRKVMEAFEQAERKPKPNPNLLFSDVYQEMPAQLRKQQESLARHLQTYGEHYPLDHFDK.

The transit peptide at 1 to 45 (MAVAIAAARVWRLNRGLSQAALLLLRQPGARGLARSHPPRQQQQF) directs the protein to the mitochondrion. Residues 33-52 (LARSHPPRQQQQFSSLDDKP) form a disordered region. Thiamine diphosphate contacts are provided by Tyr-158 and Arg-159. A K(+)-binding site is contributed by Ser-206. Ser-207 contacts thiamine diphosphate. Residues Pro-208, Thr-211, and Gln-212 each contribute to the K(+) site. Glu-238 lines the Mg(2+) pocket. 3 residues coordinate thiamine diphosphate: Gly-239, Ala-240, and Arg-265. Mg(2+) contacts are provided by Asn-267 and Tyr-269. His-336 serves as a coordination point for thiamine diphosphate. Ser-337 is subject to Phosphoserine; by BCKDK. The residue at position 338 (Thr-338) is a Phosphothreonine. A phosphoserine mark is found at Ser-339 and Ser-347. Lys-356 is modified (N6-acetyllysine; alternate). N6-succinyllysine; alternate is present on Lys-356. An N6-succinyllysine modification is found at Lys-380.

This sequence belongs to the BCKDHA family. In terms of assembly, heterotetramer of 2 alpha/BCKDHA and 2 beta chains/BCKDHB that forms the branched-chain alpha-keto acid decarboxylase (E1) component of the BCKD complex. The branched-chain alpha-ketoacid dehydrogenase is a large complex composed of three major building blocks E1, E2 and E3. It is organized around E2, a 24-meric cubic core composed of DBT, to which are associated 6 to 12 copies of E1, and approximately 6 copies of the dehydrogenase E3, a DLD dimer. Interacts with PPM1K. Requires thiamine diphosphate as cofactor. Mg(2+) is required as a cofactor. Phosphorylated at Ser-337 by BCKDK and dephosphorylated by protein phosphatase PPM1K.

The protein localises to the mitochondrion matrix. The enzyme catalyses N(6)-[(R)-lipoyl]-L-lysyl-[protein] + 3-methyl-2-oxobutanoate + H(+) = N(6)-[(R)-S(8)-2-methylpropanoyldihydrolipoyl]-L-lysyl-[protein] + CO2. Together with BCKDHB forms the heterotetrameric E1 subunit of the mitochondrial branched-chain alpha-ketoacid dehydrogenase (BCKD) complex. The BCKD complex catalyzes the multi-step oxidative decarboxylation of alpha-ketoacids derived from the branched-chain amino-acids valine, leucine and isoleucine producing CO2 and acyl-CoA which is subsequently utilized to produce energy. The E1 subunit catalyzes the first step with the decarboxylation of the alpha-ketoacid forming an enzyme-product intermediate. A reductive acylation mediated by the lipoylamide cofactor of E2 extracts the acyl group from the E1 active site for the next step of the reaction. This Homo sapiens (Human) protein is 2-oxoisovalerate dehydrogenase subunit alpha, mitochondrial.